A 166-amino-acid chain; its full sequence is Large ribosomal subunit protein uL10 (166 aa).

This sequence belongs to the universal ribosomal protein uL10 family. In terms of assembly, part of the ribosomal stalk of the 50S ribosomal subunit. The N-terminus interacts with L11 and the large rRNA to form the base of the stalk. The C-terminus forms an elongated spine to which L12 dimers bind in a sequential fashion forming a multimeric L10(L12)X complex.

Forms part of the ribosomal stalk, playing a central role in the interaction of the ribosome with GTP-bound translation factors. This Aeromonas hydrophila subsp. hydrophila (strain ATCC 7966 / DSM 30187 / BCRC 13018 / CCUG 14551 / JCM 1027 / KCTC 2358 / NCIMB 9240 / NCTC 8049) protein is Large ribosomal subunit protein uL10.